The primary structure comprises 142 residues: Nucleoside diphosphate kinase (142 aa).

Lys-11, Phe-59, Arg-87, Thr-93, Arg-104, and Asn-114 together coordinate ATP. The active-site Pros-phosphohistidine intermediate is His-117.

The protein belongs to the NDK family. As to quaternary structure, homotetramer. The cofactor is Mg(2+).

The protein resides in the cytoplasm. It catalyses the reaction a 2'-deoxyribonucleoside 5'-diphosphate + ATP = a 2'-deoxyribonucleoside 5'-triphosphate + ADP. The catalysed reaction is a ribonucleoside 5'-diphosphate + ATP = a ribonucleoside 5'-triphosphate + ADP. In terms of biological role, major role in the synthesis of nucleoside triphosphates other than ATP. The ATP gamma phosphate is transferred to the NDP beta phosphate via a ping-pong mechanism, using a phosphorylated active-site intermediate. This chain is Nucleoside diphosphate kinase, found in Yersinia pseudotuberculosis serotype I (strain IP32953).